Consider the following 56-residue polypeptide: Endoglucanase Cel5A (56 aa).

Glu45 functions as the Nucleophile in the catalytic mechanism.

This sequence belongs to the glycosyl hydrolase 5 (cellulase A) family.

The protein resides in the secreted. Its subcellular location is the extracellular space. It carries out the reaction Endohydrolysis of (1-&gt;4)-beta-D-glucosidic linkages in cellulose, lichenin and cereal beta-D-glucans.. Has avicelase and carboxymethylcellulase activity. The polypeptide is Endoglucanase Cel5A (Gloeophyllum trabeum (Brown rot fungus)).